Consider the following 474-residue polypeptide: 3-isopropylmalate dehydratase large subunit (474 aa).

The [4Fe-4S] cluster site is built by Cys353, Cys414, and Cys417.

This sequence belongs to the aconitase/IPM isomerase family. LeuC type 1 subfamily. In terms of assembly, heterodimer of LeuC and LeuD. It depends on [4Fe-4S] cluster as a cofactor.

It carries out the reaction (2R,3S)-3-isopropylmalate = (2S)-2-isopropylmalate. It functions in the pathway amino-acid biosynthesis; L-leucine biosynthesis; L-leucine from 3-methyl-2-oxobutanoate: step 2/4. Catalyzes the isomerization between 2-isopropylmalate and 3-isopropylmalate, via the formation of 2-isopropylmaleate. The protein is 3-isopropylmalate dehydratase large subunit of Xylella fastidiosa (strain 9a5c).